Here is a 145-residue protein sequence, read N- to C-terminus: MYPAHLLLLLAVCVSLLGASAIPPLPLNLAQFALVIKCADKGKRPRWHYMDYGCYCGPGGSGTPVDELDRCCKTHDECYAQAEKKGCYPKLTMYSYYCGGDGPYCNSKTECQRFVCDCDVRAADCFARYPYNNKNYNINTSKRCE.

Positions 1 to 21 (MYPAHLLLLLAVCVSLLGASA) are cleaved as a signal peptide. A propeptide spanning residues 22–27 (IPPLPL) is cleaved from the precursor. Intrachain disulfides connect C38–C98, C54–C144, C56–C72, C71–C125, C78–C118, C87–C111, and C105–C116. Residues Y55, G57, and G59 each coordinate Ca(2+). Residue H75 is part of the active site. D76 is a binding site for Ca(2+). D119 is a catalytic residue.

The protein belongs to the phospholipase A2 family. Group I subfamily. D49 sub-subfamily. The cofactor is Ca(2+).

The protein localises to the secreted. It catalyses the reaction a 1,2-diacyl-sn-glycero-3-phosphocholine + H2O = a 1-acyl-sn-glycero-3-phosphocholine + a fatty acid + H(+). Functionally, PLA2 catalyzes the calcium-dependent hydrolysis of the 2-acyl groups in 3-sn-phosphoglycerides. The protein is Basic phospholipase A2 PC10 of Laticauda laticaudata (Blue-ringed sea krait).